The primary structure comprises 365 residues: MDFSEFSLEITNNKNFADWDYVECKYFHKDFAYGRFALSPLTAKESRLLKKGLFEALLTEILCLRFTHAKIQNECVNLMNIVGIQESLDEILKNFGKIILTGKLEEFVGKGPFVAILDVRGPLNAMAVDIELPPGIKVEIETQHIATITEPIPFVVELRIELVSSTSKGETGITDEEGFSIDPNPPIRKVNSSIQGYEYGGQTFERLSIEMLTSLPIIPNEALLLGSMKIMNLFQIVLQAKYLDYKELEKGIHVGVFCVSALRAEQSKWIKTILEDALYMVGGRKHQGPLTDEEDDSIDSNFTPVQNLDCRIESYEEEGQTFQRLFLEIWTKSPTEPQEALWEASAKILELFSLFLQTSKENEKD.

Belongs to the RNA polymerase alpha chain family. As to quaternary structure, in plastids the minimal PEP RNA polymerase catalytic core is composed of four subunits: alpha, beta, beta', and beta''. When a (nuclear-encoded) sigma factor is associated with the core the holoenzyme is formed, which can initiate transcription.

The protein resides in the plastid. The protein localises to the chloroplast. The catalysed reaction is RNA(n) + a ribonucleoside 5'-triphosphate = RNA(n+1) + diphosphate. Its function is as follows. DNA-dependent RNA polymerase catalyzes the transcription of DNA into RNA using the four ribonucleoside triphosphates as substrates. The polypeptide is Putative DNA-directed RNA polymerase subunit alpha-like 3 (rpoAL3-A) (Pelargonium hortorum (Common geranium)).